The sequence spans 394 residues: Elongation factor Tu (394 aa).

The 195-residue stretch at 10-204 (KPHVNIGTIG…AVDSYIPQPV (195 aa)) folds into the tr-type G domain. Positions 19 to 26 (GHVDHGKT) are G1. GTP is bound at residue 19 to 26 (GHVDHGKT). Mg(2+) is bound at residue Thr-26. The segment at 60–64 (GITIS) is G2. The tract at residues 81–84 (DCPG) is G3. Residues 81–85 (DCPGH) and 136–139 (NKVD) contribute to the GTP site. A G4 region spans residues 136-139 (NKVD). Positions 174–176 (SAL) are G5.

It belongs to the TRAFAC class translation factor GTPase superfamily. Classic translation factor GTPase family. EF-Tu/EF-1A subfamily. Monomer.

The protein resides in the cytoplasm. It carries out the reaction GTP + H2O = GDP + phosphate + H(+). In terms of biological role, GTP hydrolase that promotes the GTP-dependent binding of aminoacyl-tRNA to the A-site of ribosomes during protein biosynthesis. The chain is Elongation factor Tu from Rickettsia rhipicephali.